The primary structure comprises 339 residues: Senescence-specific cysteine protease SAG39 (339 aa).

Residues 1 to 23 form the signal peptide; that stretch reads MAMAKALLFAILGCLCLCSAVLA. 3 disulfide bridges follow: Cys144-Cys187, Cys178-Cys220, and Cys276-Cys328. Residue Cys147 is part of the active site. Residues His282 and Asn303 contribute to the active site.

The protein belongs to the peptidase C1 family.

The protein localises to the vacuole. Functionally, cysteine protease that may have a developmental senescence specific cell death function during apoptosis, heavy metal detoxification, and hypersensitive response. This chain is Senescence-specific cysteine protease SAG39, found in Oryza sativa subsp. indica (Rice).